The following is a 128-amino-acid chain: Glycine cleavage system H protein (128 aa).

The region spanning 24–106 is the Lipoyl-binding domain; sequence VYSVGITEHA…YTDGWLFSIK (83 aa). Lys-65 bears the N6-lipoyllysine mark.

This sequence belongs to the GcvH family. As to quaternary structure, the glycine cleavage system is composed of four proteins: P, T, L and H. It depends on (R)-lipoate as a cofactor.

The glycine cleavage system catalyzes the degradation of glycine. The H protein shuttles the methylamine group of glycine from the P protein to the T protein. This Yersinia enterocolitica serotype O:8 / biotype 1B (strain NCTC 13174 / 8081) protein is Glycine cleavage system H protein.